The following is a 617-amino-acid chain: MALLQIAEPGQTAAPHQHRLAVGIDLGTTNSLVASVRSGQTQVLLDDQERALVPSVVHYGEQQKTVGIEAFAQASLDPQNTVISAKRLIGRSLADVQTRYPDLPYQFIASDNGLPLIQTKQGNKSPVEVSADILSHLNRFAEQRLGGELSGVVITVPAYFDDAQRQSTKDAARLAGLNVLRLLNEPTAAAIAYGLDSGQEGVIAVYDLGGGTFDISILRLSRGVFEVLATGGDTALGGDDFDHLLADWIAQQANYQPQNANEQRELLTLATQTKVALSQAVETEVKFANWQGTVSREQFNELIQLLVKRSLMTCRRALKDAGVEGEEIREVVMVGGSTRVPFVREQVGEFFGKQPLTSIDPDKVVALGAAIQADILVGNKPDSEMLLLDVVPLSLGIETMGGLVEKIIPRNMTIPVARAQEFTTAKDGQTAMSVHVLQGERELVEDCRSLGRFTLRGIPPMVAGAATIRVTYQVDADGLLSVTAMEKSTKVQASIQIKPSYGLTDEEVTQMIKSSMTNAKEDMEARQLAEQRVEADRTIDTVISALQQDGAEVLSVEEFKLIEAEIAKLIQLKQGTDRQAIAQGVKDLDLATQTFAAKRMNLSIQKALAGKAVDEII.

Belongs to the heat shock protein 70 family.

Its function is as follows. Chaperone involved in the maturation of iron-sulfur cluster-containing proteins. Has a low intrinsic ATPase activity which is markedly stimulated by HscB. The sequence is that of Chaperone protein HscA homolog from Actinobacillus pleuropneumoniae serotype 5b (strain L20).